Reading from the N-terminus, the 736-residue chain is Zinc finger CCCH domain-containing protein 14 (736 aa).

Met1 bears the N-acetylmethionine mark. A compositionally biased stretch (polar residues) spans 77-103 (TTEPSSLKSPDTSIFDSNVPSNKSSFS). Positions 77-153 (TTEPSSLKSP…RHSYDDGAST (77 aa)) are disordered. Position 85 is a phosphoserine (Ser85). Residues Lys99, Lys139, Lys175, and Lys198 each participate in a glycyl lysine isopeptide (Lys-Gly) (interchain with G-Cter in SUMO2) cross-link. Residues 123-148 (RPEKRDSRVSTSSQEHKSTNVRHSYD) show a composition bias toward basic and acidic residues. Ser240 carries the post-translational modification Phosphoserine. Residues Lys245, Lys283, and Lys295 each participate in a glycyl lysine isopeptide (Lys-Gly) (interchain with G-Cter in SUMO2) cross-link. Residues 308–350 (FSHDGEEEEEDEDYGTRVGSLSSSVSVPAKPERRPSLPPSKQA) form a disordered region. Phosphoserine is present on residues Ser309, Ser327, and Ser343. At Lys357 the chain carries N6-acetyllysine; alternate. Residue Lys357 forms a Glycyl lysine isopeptide (Lys-Gly) (interchain with G-Cter in SUMO2); alternate linkage. Over residues 367 to 380 (TKTTNYPAVPQKQT) the composition is skewed to polar residues. A disordered region spans residues 367–386 (TKTTNYPAVPQKQTLPVAPR). A Glycyl lysine isopeptide (Lys-Gly) (interchain with G-Cter in SUMO2) cross-link involves residue Lys378. 2 positions are modified to phosphoserine: Ser390 and Ser409. A disordered region spans residues 400 to 420 (QGQNRAPRISPPVKEEEAKGD). Residues Lys413 and Lys489 each participate in a glycyl lysine isopeptide (Lys-Gly) (interchain with G-Cter in SUMO2) cross-link. Residues Ser498, Ser515, Ser527, and Ser620 each carry the phosphoserine modification. 5 C3H1-type zinc fingers span residues 595–620 (EKLL…HPIS), 621–640 (PCKA…VHPN), 641–656 (CKYD…PFTH), 682–699 (CRYF…YHPK), and 701–719 (CRFN…HPTI).

Belongs to the ZC3H14 family. In terms of assembly, homodimer; facilitating circular RNAs (circRNAs) formation. Associates with the spliceosome. Interacts with HOOK2. Interacts with ZFC3H1 in a RNase-sensitive manner.

The protein resides in the nucleus speckle. In terms of biological role, RNA-binding protein involved in the biogenesis of circular RNAs (circRNAs), which are produced by back-splicing circularization of pre-mRNAs. Acts by binding to both exon-intron boundary and 3'-UTR of pre-mRNAs to promote circRNA biogenesis through dimerization and the association with the spliceosome. Required for spermatogenesis via involvement in circRNA biogenesis. Regulates the pre-mRNA processing of ATP5MC1; preventing its degradation. Also binds the poly(A) tail of mRNAs; controlling poly(A) length in neuronal cells. This Rattus norvegicus (Rat) protein is Zinc finger CCCH domain-containing protein 14.